Reading from the N-terminus, the 73-residue chain is Ocellatin-PT8 (73 aa).

The first 22 residues, 1 to 22 (MAFLKKSLFLVLFLGLVSLSIC), serve as a signal peptide directing secretion. Positions 23 to 39 (DEEKRQDEDDDDDDDEE) are excised as a propeptide.

Expressed by the skin glands.

The protein localises to the secreted. Has antibacterial activity against Gram-negative bacteria E.coli ATCC 25922 (MIC=60 uM), K.pneumoniae ATCC 700603 (MIC=240 uM) and S.choleraesuis ATCC 14028 (MIC=240 uM) and against Gram-positive bacterium S.aureus ATCC 29313 (MIC=240 uM). Shows no hemolytic activity and no cytotoxicity. This chain is Ocellatin-PT8, found in Leptodactylus pustulatus (Ceara white-lipped frog).